Here is a 64-residue protein sequence, read N- to C-terminus: U2-aranetoxin-Av1a (64 aa).

Expressed in fat body, but not in cephalothorax, silk gland, midgut.

Functionally, insecticidal toxin. The sequence is that of U2-aranetoxin-Av1a from Araneus ventricosus (Orbweaver spider).